The primary structure comprises 230 residues: ATP phosphoribosyltransferase (230 aa).

It belongs to the ATP phosphoribosyltransferase family. Short subfamily. Heteromultimer composed of HisG and HisZ subunits.

It localises to the cytoplasm. It carries out the reaction 1-(5-phospho-beta-D-ribosyl)-ATP + diphosphate = 5-phospho-alpha-D-ribose 1-diphosphate + ATP. The protein operates within amino-acid biosynthesis; L-histidine biosynthesis; L-histidine from 5-phospho-alpha-D-ribose 1-diphosphate: step 1/9. Catalyzes the condensation of ATP and 5-phosphoribose 1-diphosphate to form N'-(5'-phosphoribosyl)-ATP (PR-ATP). Has a crucial role in the pathway because the rate of histidine biosynthesis seems to be controlled primarily by regulation of HisG enzymatic activity. In Chelativorans sp. (strain BNC1), this protein is ATP phosphoribosyltransferase (hisG).